We begin with the raw amino-acid sequence, 162 residues long: Fibroblast growth factor 22 (162 aa).

The signal sequence occupies residues 1–22; it reads MRSRLWLGLAWLLLARAPGAPG.

Belongs to the heparin-binding growth factors family. As to quaternary structure, interacts with FGFR1 and FGFR2. Interacts with FGFBP1. Preferentially expressed in skin; low expression in brain. Expressed in the inner root sheath of the hair follicle.

It is found in the secreted. Plays a role in the fasting response, glucose homeostasis, lipolysis and lipogenesis. Can stimulate cell proliferation (in vitro). May be involved in hair development. The polypeptide is Fibroblast growth factor 22 (Fgf22) (Mus musculus (Mouse)).